We begin with the raw amino-acid sequence, 355 residues long: Heterogeneous nuclear ribonucleoprotein D0 (355 aa).

Residues 1-92 are disordered; sequence MSEEQFGGDG…SPRHSEAATA (92 aa). An N-acetylserine modification is found at Ser-2. 2 stretches are compositionally biased toward low complexity: residues 11-20 and 27-42; these read AAAAATAAVG and EGAM…AAAG. The span at 43–58 shows a compositional bias: gly residues; sequence SGAGTGGGTASGGTEG. Residues 64–73 show a composition bias toward basic and acidic residues; the sequence is EGAKIDASKN. Ser-71 is subject to Phosphoserine. Lys-72 participates in a covalent cross-link: Glycyl lysine isopeptide (Lys-Gly) (interchain with G-Cter in SUMO2). Phosphoserine occurs at positions 80, 82, and 83. Residue Thr-91 is modified to Phosphothreonine. 2 consecutive RRM domains span residues 97–179 and 182–261; these read WKMF…KTKE and KKIF…MSKE. The residue at position 119 (Lys-119) is an N6-methyllysine. Residue Thr-127 is modified to Phosphothreonine. Residue Lys-129 forms a Glycyl lysine isopeptide (Lys-Gly) (interchain with G-Cter in SUMO2) linkage. Lys-165 carries the post-translational modification N6-acetyllysine. Ser-190 carries the phosphoserine modification. At Thr-193 the chain carries Phosphothreonine. Lys-197 participates in a covalent cross-link: Glycyl lysine isopeptide (Lys-Gly) (interchain with G-Cter in SUMO2). 2 positions are modified to N6-acetyllysine: Lys-243 and Lys-251. Omega-N-methylarginine is present on Tyr-263. The residue at position 271 (Ser-271) is a Phosphoserine. Arg-272 carries the omega-N-methylarginine modification. Gly-273 bears the N6-acetyllysine mark. Arg-278, Arg-280, and Arg-282 each carry omega-N-methylarginine. The residue at position 292 (Gln-292) is an N6-acetyllysine. An Asymmetric dimethylarginine; alternate modification is found at Arg-345. Arg-345 is subject to Dimethylated arginine; alternate. Position 345 is an omega-N-methylarginine; alternate (Arg-345).

In terms of assembly, identified in a IGF2BP1-dependent mRNP granule complex containing untranslated mRNAs. Part of a complex associated with the FOS mCRD domain and consisting of PABPC1, PAIP1, CSDE1/UNR and SYNCRIP. Interacts with IGF2BP2. Interacts with GTPBP1. Interacts with EIF4G1; the interaction requires RNA. Interacts with EIF3B and RPS3. Post-translationally, arg-345 is dimethylated, probably to asymmetric dimethylarginine. Methylated by PRMT1, in an insulin-dependent manner. The PRMT1-mediated methylation regulates tyrosine phosphorylation.

It localises to the nucleus. Its subcellular location is the cytoplasm. Binds with high affinity to RNA molecules that contain AU-rich elements (AREs) found within the 3'-UTR of many proto-oncogenes and cytokine mRNAs. Also binds to double- and single-stranded DNA sequences in a specific manner and functions a transcription factor. Each of the RNA-binding domains specifically can bind solely to a single-stranded non-monotonous 5'-UUAG-3' sequence and also weaker to the single-stranded 5'-TTAGGG-3' telomeric DNA repeat. Binds RNA oligonucleotides with 5'-UUAGGG-3' repeats more tightly than the telomeric single-stranded DNA 5'-TTAGGG-3' repeats. Binding of RRM1 to DNA inhibits the formation of DNA quadruplex structure which may play a role in telomere elongation. May be involved in translationally coupled mRNA turnover. Implicated with other RNA-binding proteins in the cytoplasmic deadenylation/translational and decay interplay of the FOS mRNA mediated by the major coding-region determinant of instability (mCRD) domain. May play a role in the regulation of the rhythmic expression of circadian clock core genes. Directly binds to the 3'UTR of CRY1 mRNA and induces CRY1 rhythmic translation. May also be involved in the regulation of PER2 translation. This is Heterogeneous nuclear ribonucleoprotein D0 (HNRNPD) from Homo sapiens (Human).